The chain runs to 310 residues: Methionyl-tRNA formyltransferase (310 aa).

(6S)-5,6,7,8-tetrahydrofolate is bound at residue 109–112 (SLLP).

This sequence belongs to the Fmt family.

It catalyses the reaction L-methionyl-tRNA(fMet) + (6R)-10-formyltetrahydrofolate = N-formyl-L-methionyl-tRNA(fMet) + (6S)-5,6,7,8-tetrahydrofolate + H(+). In terms of biological role, attaches a formyl group to the free amino group of methionyl-tRNA(fMet). The formyl group appears to play a dual role in the initiator identity of N-formylmethionyl-tRNA by promoting its recognition by IF2 and preventing the misappropriation of this tRNA by the elongation apparatus. This Pseudomonas putida (strain ATCC 47054 / DSM 6125 / CFBP 8728 / NCIMB 11950 / KT2440) protein is Methionyl-tRNA formyltransferase.